The sequence spans 395 residues: Renin (395 aa).

The signal sequence occupies residues 1–21 (MLRSWEFVLLISCFLCFSSDA). The propeptide at 22–43 (LQRISLKKMPSIRETLQEMGMK) is activation peptide. The N-linked (GlcNAc...) asparagine glycan is linked to N64. The region spanning 79–392 (YYGEISIGTP…DRQNNRIGFA (314 aa)) is the Peptidase A1 domain. The active site involves D97. Cystine bridges form between C110/C117 and C274/C278. D283 is a catalytic residue. C316 and C351 are disulfide-bonded.

The protein belongs to the peptidase A1 family. N-glycosylated. In terms of tissue distribution, expressed by the venom gland (at protein level).

The protein resides in the secreted. The catalysed reaction is Cleavage of Leu-|-Xaa bond in angiotensinogen to generate angiotensin I.. With respect to regulation, inhibited completely by aspartyl protease inhibitor pepstatin A, but not by the serine- or metalloproteinase inhibitors PMSF or EDTA. In terms of biological role, renin is a highly specific endopeptidase, whose only known function is to generate angiotensin I from angiotensinogen in the plasma, initiating a cascade of reactions that produce an elevation of blood pressure and increased sodium retention by the kidney. This protein is also found in snake venom and shown to specifically cleave human and porcine angiotensinogen into angiotensin I. It does not have general protease activity, no cleavage of alpha or beta casein. May be directly responsible for elevation of blood pressure in the victims of envenomation. In Echis ocellatus (Ocellated saw-scaled viper), this protein is Renin.